The primary structure comprises 341 residues: Large ribosomal subunit protein uL29m (341 aa).

The disordered stretch occupies residues 44–74 (LARTRYTKPKPKPPRRSKVRAPTQTTHHDTD). A compositionally biased stretch (basic residues) spans 48–62 (RYTKPKPKPPRRSKV).

The protein belongs to the universal ribosomal protein uL29 family. As to quaternary structure, component of the mitochondrial large ribosomal subunit. Mature mitochondrial ribosomes consist of a small (37S) and a large (54S) subunit. The 37S subunit contains at least 33 different proteins and 1 molecule of RNA (15S). The 54S subunit contains at least 45 different proteins and 1 molecule of RNA (21S).

The protein localises to the mitochondrion. The protein is Large ribosomal subunit protein uL29m (MRPL4) of Eremothecium gossypii (strain ATCC 10895 / CBS 109.51 / FGSC 9923 / NRRL Y-1056) (Yeast).